A 152-amino-acid chain; its full sequence is MSEKYIVTWDMLQIHARKLASRLMPSEQWKGIIAVSRGGLVPGALLARELGIRHVDTVCISSYDHDNQRELKVLKRAEGDGEGFIVIDDLVDTGGTAVAIREMYPKAHFITIFAKPAGRPLVDDYVVDIPQNTWIEQPWDMGVVFVPPISGR.

5-phospho-alpha-D-ribose 1-diphosphate is bound by residues 37 to 38 (RG), arginine 69, and 88 to 96 (DDLVDTGGT). Arginine 69 contacts GMP. Aspartate 89 is a Mg(2+) binding site. Positions 92 and 135 each coordinate guanine. 2 residues coordinate xanthine: aspartate 92 and isoleucine 135. Residues 92-96 (DTGGT) and 134-135 (WI) each bind GMP.

It belongs to the purine/pyrimidine phosphoribosyltransferase family. XGPT subfamily. Homotetramer. It depends on Mg(2+) as a cofactor.

It is found in the cell inner membrane. It catalyses the reaction GMP + diphosphate = guanine + 5-phospho-alpha-D-ribose 1-diphosphate. The enzyme catalyses XMP + diphosphate = xanthine + 5-phospho-alpha-D-ribose 1-diphosphate. The catalysed reaction is IMP + diphosphate = hypoxanthine + 5-phospho-alpha-D-ribose 1-diphosphate. It participates in purine metabolism; GMP biosynthesis via salvage pathway; GMP from guanine: step 1/1. Its pathway is purine metabolism; XMP biosynthesis via salvage pathway; XMP from xanthine: step 1/1. In terms of biological role, purine salvage pathway enzyme that catalyzes the transfer of the ribosyl-5-phosphate group from 5-phospho-alpha-D-ribose 1-diphosphate (PRPP) to the N9 position of the 6-oxopurines guanine and xanthine to form the corresponding ribonucleotides GMP (guanosine 5'-monophosphate) and XMP (xanthosine 5'-monophosphate), with the release of PPi. To a lesser extent, also acts on hypoxanthine. In Escherichia coli (strain UTI89 / UPEC), this protein is Xanthine-guanine phosphoribosyltransferase.